Consider the following 112-residue polypeptide: Putative pterin-4-alpha-carbinolamine dehydratase (112 aa).

Belongs to the pterin-4-alpha-carbinolamine dehydratase family.

The enzyme catalyses (4aS,6R)-4a-hydroxy-L-erythro-5,6,7,8-tetrahydrobiopterin = (6R)-L-erythro-6,7-dihydrobiopterin + H2O. The protein is Putative pterin-4-alpha-carbinolamine dehydratase of Shewanella sp. (strain MR-7).